We begin with the raw amino-acid sequence, 437 residues long: Vasoactive intestinal polypeptide receptor 2 (437 aa).

A signal peptide spans 1–22 (MRASVVLTCYCWLLVRVSSIHP). Topologically, residues 23 to 123 (ECRFHLEIQE…EDESKISFYI (101 aa)) are extracellular. Disulfide bonds link Cys-37–Cys-60, Cys-51–Cys-92, and Cys-74–Cys-108. 3 N-linked (GlcNAc...) asparagine glycosylation sites follow: Asn-57, Asn-87, and Asn-91. Residues 124–149 (LVKAIYTLGYSVSLMSLTTGSIIICL) traverse the membrane as a helical segment. Topologically, residues 150 to 157 (FRKLHCTR) are cytoplasmic. The chain crosses the membrane as a helical span at residues 158-179 (NYIHLNLFLSFMLRAISVLVKD). Residues 180–202 (SVLYSSSGLLRCHDQPASWVGCK) are Extracellular-facing. A disulfide bridge connects residues Cys-201 and Cys-270. Residues 203 to 227 (LSLVFFQYCIMANFYWLLVEGLYLH) traverse the membrane as a helical segment. Over 228–238 (TLLVAILPPSR) the chain is Cytoplasmic. The helical transmembrane segment at 239-260 (CFLAYLLIGWGIPSVCIGAWTA) threads the bilayer. Residues 261–279 (TRLSLEDTGCWDTNDHSIP) lie on the Extracellular side of the membrane. The helical transmembrane segment at 280 to 303 (WWVIRMPILISIVVNFALFISIVR) threads the bilayer. Residues 304–324 (ILLQKLTSPDVGGNDQSQYKR) are Cytoplasmic-facing. Residues 325 to 345 (LAKSTLLLIPLFGVHYMVFAA) form a helical membrane-spanning segment. Over 346–353 (FPIGISST) the chain is Extracellular. Residues 354-377 (YQILFELCVGSFQGLVVAVLYCFL) traverse the membrane as a helical segment. The Cytoplasmic portion of the chain corresponds to 378–437 (NSEVQCELKRRWRGLCLTQAGSRDYRLHSWSMSRNGSESALQIHRGSRTQSFLQSETSVI).

Belongs to the G-protein coupled receptor 2 family. As to quaternary structure, interacts with ADCYAP1/PACAP (via N-terminal extracellular domain); activated by PACAP27 and CAPAC38 neuropeptides. Interacts with VIP; the interaction results in VIPR1 activation. Expressed at high levels in the MIN6 cells, at moderate levels in pancreatic islets, insulin-secreting cells, lung, brain, stomach, and colon, and at low levels in the heart.

It localises to the cell membrane. G protein-coupled receptor activated by the neuropeptides vasoactive intestinal peptide (VIP) and pituitary adenylate cyclase-activating polypeptide (ADCYAP1/PACAP). Binds VIP and both PACAP27 and PACAP38 bioactive peptides with the order of ligand affinity of VIP = PACAP38 &gt; PACAP27. Ligand binding causes a conformation change that triggers signaling via guanine nucleotide-binding proteins (G proteins) and modulates the activity of downstream effectors. Activates cAMP-dependent pathway. May be coupled to phospholipase C. The polypeptide is Vasoactive intestinal polypeptide receptor 2 (Mus musculus (Mouse)).